Reading from the N-terminus, the 516-residue chain is 1-pyrroline-5-carboxylate dehydrogenase (516 aa).

Residues Glu287 and Cys321 contribute to the active site.

This sequence belongs to the aldehyde dehydrogenase family. RocA subfamily.

It carries out the reaction L-glutamate 5-semialdehyde + NAD(+) + H2O = L-glutamate + NADH + 2 H(+). It participates in amino-acid degradation; L-proline degradation into L-glutamate; L-glutamate from L-proline: step 2/2. This chain is 1-pyrroline-5-carboxylate dehydrogenase, found in Bacillus licheniformis (strain ATCC 14580 / DSM 13 / JCM 2505 / CCUG 7422 / NBRC 12200 / NCIMB 9375 / NCTC 10341 / NRRL NRS-1264 / Gibson 46).